A 315-amino-acid chain; its full sequence is Heterodimeric geranylgeranyl pyrophosphate synthase small subunit 1, chloroplastic (315 aa).

Residues D124 and G130 each contribute to the Mg(2+) site. 3 residues coordinate dimethylallyl diphosphate: K228, Q265, and K280.

This sequence belongs to the FPP/GGPP synthase family. Part of a heterodimeric geranyl(geranyl)diphosphate synthase. The cofactor is Mg(2+). Mainly expressed in trichomes, and, to a lower extent, in roots, leaves, flowers and stems.

It is found in the plastid. It localises to the chloroplast thylakoid membrane. Its subcellular location is the chloroplast. Heterodimeric geranyl(geranyl)-diphosphate (GPP) synthase small subunit. The small subunit alone is inactive in vitro while the large subunit GGPPS1 catalyzes mainly the production of geranygeranyl-diphosphate in vitro. Upon association of the two subunits, the product profile changes and the production of gerany-diphosphate is strongly increased. This is Heterodimeric geranylgeranyl pyrophosphate synthase small subunit 1, chloroplastic from Cannabis sativa (Hemp).